Consider the following 114-residue polypeptide: Large ribosomal subunit protein uL18 (114 aa).

It belongs to the universal ribosomal protein uL18 family. Part of the 50S ribosomal subunit; part of the 5S rRNA/L5/L18/L25 subcomplex. Contacts the 23S rRNA. Contacts protein L27 and the 5S rRNA.

In terms of biological role, this is one of the proteins that bind and probably mediate the attachment of the 5S RNA into the large ribosomal subunit, where it forms part of the central protuberance. This Deinococcus radiodurans (strain ATCC 13939 / DSM 20539 / JCM 16871 / CCUG 27074 / LMG 4051 / NBRC 15346 / NCIMB 9279 / VKM B-1422 / R1) protein is Large ribosomal subunit protein uL18 (rplR).